The chain runs to 279 residues: MFRAPCHRLRARGTRKARAGAWRGCTFPCLGKGMERPAAREPHGPDALRRFQGLLLDRRGRLHGQVLRLREVARRLERLRRRSLVANVAGSSLSATGALAAIVGLSLSPVTLGTSLLVSAVGLGVATAGGAVTITSDLSLIFCNSRELRRVQEIAATCQDQMREILSCLEFFCRWQGCGDRQLLQCGRNASIALYNSVYFIVFFGSRGFLIPRRAEGDTKVSQAVLKAKIQKLAESLESCTGALDELSEQLESRVQLCTKSSRGHDLKISADQRAGLFF.

The next 3 helical transmembrane spans lie at 83–105 (SLVA…IVGL), 122–142 (GLGV…SLIF), and 192–212 (IALY…FLIP). Residues 226-253 (LKAKIQKLAESLESCTGALDELSEQLES) adopt a coiled-coil conformation.

This sequence belongs to the apolipoprotein L family. As to expression, expressed in neonatal dermal microvascular endothelial cells.

Its subcellular location is the cell membrane. It is found in the cell junction. The protein localises to the cytoplasmic vesicle. The protein resides in the secretory vesicle. In terms of biological role, is a modulator of endothelial barrier permeability, required for proper organization of endothelial cell-cell junctions and cytoskeleton. It also plays a role in the modulation of secretory autophagy. May affect blood-brain barrier permeability. This is Apolipoprotein L domain-containing protein 1 (APOLD1) from Homo sapiens (Human).